Consider the following 364-residue polypeptide: UDP-N-acetylglucosamine--N-acetylmuramyl-(pentapeptide) pyrophosphoryl-undecaprenol N-acetylglucosamine transferase (364 aa).

Residues 13–15 (TGG), Asn-125, Arg-165, Ser-192, and Gln-293 each bind UDP-N-acetyl-alpha-D-glucosamine.

The protein belongs to the glycosyltransferase 28 family. MurG subfamily.

Its subcellular location is the cell inner membrane. The catalysed reaction is di-trans,octa-cis-undecaprenyl diphospho-N-acetyl-alpha-D-muramoyl-L-alanyl-D-glutamyl-meso-2,6-diaminopimeloyl-D-alanyl-D-alanine + UDP-N-acetyl-alpha-D-glucosamine = di-trans,octa-cis-undecaprenyl diphospho-[N-acetyl-alpha-D-glucosaminyl-(1-&gt;4)]-N-acetyl-alpha-D-muramoyl-L-alanyl-D-glutamyl-meso-2,6-diaminopimeloyl-D-alanyl-D-alanine + UDP + H(+). The protein operates within cell wall biogenesis; peptidoglycan biosynthesis. Its function is as follows. Cell wall formation. Catalyzes the transfer of a GlcNAc subunit on undecaprenyl-pyrophosphoryl-MurNAc-pentapeptide (lipid intermediate I) to form undecaprenyl-pyrophosphoryl-MurNAc-(pentapeptide)GlcNAc (lipid intermediate II). The sequence is that of UDP-N-acetylglucosamine--N-acetylmuramyl-(pentapeptide) pyrophosphoryl-undecaprenol N-acetylglucosamine transferase from Cereibacter sphaeroides (strain ATCC 17029 / ATH 2.4.9) (Rhodobacter sphaeroides).